The primary structure comprises 1183 residues: DNA-directed RNA polymerase subunit beta (1183 aa).

Residues 1149–1162 (DNEIEMADVDDEDA) are compositionally biased toward acidic residues. Residues 1149-1183 (DNEIEMADVDDEDATERKVDLQQKDVPETQKETTD) form a disordered region. Positions 1163–1183 (TERKVDLQQKDVPETQKETTD) are enriched in basic and acidic residues.

Belongs to the RNA polymerase beta chain family. The RNAP catalytic core consists of 2 alpha, 1 beta, 1 beta' and 1 omega subunit. When a sigma factor is associated with the core the holoenzyme is formed, which can initiate transcription.

The enzyme catalyses RNA(n) + a ribonucleoside 5'-triphosphate = RNA(n+1) + diphosphate. DNA-dependent RNA polymerase catalyzes the transcription of DNA into RNA using the four ribonucleoside triphosphates as substrates. This is DNA-directed RNA polymerase subunit beta from Staphylococcus haemolyticus (strain JCSC1435).